A 278-amino-acid chain; its full sequence is Elongation factor Ts (278 aa).

The involved in Mg(2+) ion dislocation from EF-Tu stretch occupies residues 80–83 (TDFV).

This sequence belongs to the EF-Ts family.

It localises to the cytoplasm. Its function is as follows. Associates with the EF-Tu.GDP complex and induces the exchange of GDP to GTP. It remains bound to the aminoacyl-tRNA.EF-Tu.GTP complex up to the GTP hydrolysis stage on the ribosome. The chain is Elongation factor Ts from Renibacterium salmoninarum (strain ATCC 33209 / DSM 20767 / JCM 11484 / NBRC 15589 / NCIMB 2235).